A 469-amino-acid chain; its full sequence is UDP-N-acetylmuramate--L-alanine ligase (469 aa).

113 to 119 (GTHGKTT) is an ATP binding site.

Belongs to the MurCDEF family.

It localises to the cytoplasm. It carries out the reaction UDP-N-acetyl-alpha-D-muramate + L-alanine + ATP = UDP-N-acetyl-alpha-D-muramoyl-L-alanine + ADP + phosphate + H(+). It participates in cell wall biogenesis; peptidoglycan biosynthesis. Functionally, cell wall formation. The chain is UDP-N-acetylmuramate--L-alanine ligase from Neisseria gonorrhoeae (strain ATCC 700825 / FA 1090).